Here is a 122-residue protein sequence, read N- to C-terminus: MARIAGIDLPRNKRIEIALTYIYGIGRSTSQKILAEAGVDANTRSDNLTESEVAKIRENIDKNVKVEGDLRRDISMNIKRLMDLGCYRGLRHRKGLPVHGQRTKTNARTRKGPARTVAGKKK.

Positions 96-122 (LPVHGQRTKTNARTRKGPARTVAGKKK) are disordered.

The protein belongs to the universal ribosomal protein uS13 family. Part of the 30S ribosomal subunit. Forms a loose heterodimer with protein S19. Forms two bridges to the 50S subunit in the 70S ribosome.

Functionally, located at the top of the head of the 30S subunit, it contacts several helices of the 16S rRNA. In the 70S ribosome it contacts the 23S rRNA (bridge B1a) and protein L5 of the 50S subunit (bridge B1b), connecting the 2 subunits; these bridges are implicated in subunit movement. Contacts the tRNAs in the A and P-sites. This chain is Small ribosomal subunit protein uS13, found in Geotalea daltonii (strain DSM 22248 / JCM 15807 / FRC-32) (Geobacter daltonii).